A 73-amino-acid chain; its full sequence is Sec-independent protein translocase protein TatA (73 aa).

A helical membrane pass occupies residues 1-21 (MFGLGAPELILILILALIIFG). The segment at 52 to 73 (EAAKIDDGNNNSDKEKATRQAS) is disordered.

The protein belongs to the TatA/E family. As to quaternary structure, forms a complex with TatC.

The protein localises to the cell membrane. Its function is as follows. Part of the twin-arginine translocation (Tat) system that transports large folded proteins containing a characteristic twin-arginine motif in their signal peptide across membranes. TatA could form the protein-conducting channel of the Tat system. This chain is Sec-independent protein translocase protein TatA, found in Moorella thermoacetica (strain ATCC 39073 / JCM 9320).